Here is a 443-residue protein sequence, read N- to C-terminus: UDP-N-acetylglucosamine 1-carboxyvinyltransferase 1 (443 aa).

22–23 (KN) lines the phosphoenolpyruvate pocket. Arginine 95 is a UDP-N-acetyl-alpha-D-glucosamine binding site. The active-site Proton donor is cysteine 119. A 2-(S-cysteinyl)pyruvic acid O-phosphothioketal modification is found at cysteine 119. Residues 124–128 (RPIDL), aspartate 308, and valine 330 contribute to the UDP-N-acetyl-alpha-D-glucosamine site.

Belongs to the EPSP synthase family. MurA subfamily.

It is found in the cytoplasm. It catalyses the reaction phosphoenolpyruvate + UDP-N-acetyl-alpha-D-glucosamine = UDP-N-acetyl-3-O-(1-carboxyvinyl)-alpha-D-glucosamine + phosphate. The protein operates within cell wall biogenesis; peptidoglycan biosynthesis. Its function is as follows. Cell wall formation. Adds enolpyruvyl to UDP-N-acetylglucosamine. This is UDP-N-acetylglucosamine 1-carboxyvinyltransferase 1 from Oceanobacillus iheyensis (strain DSM 14371 / CIP 107618 / JCM 11309 / KCTC 3954 / HTE831).